Here is a 314-residue protein sequence, read N- to C-terminus: tRNA dimethylallyltransferase (314 aa).

40-47 (GPTASGKS) lines the ATP pocket. Residue 42–47 (TASGKS) coordinates substrate.

The protein belongs to the IPP transferase family. Monomer. The cofactor is Mg(2+).

It carries out the reaction adenosine(37) in tRNA + dimethylallyl diphosphate = N(6)-dimethylallyladenosine(37) in tRNA + diphosphate. Catalyzes the transfer of a dimethylallyl group onto the adenine at position 37 in tRNAs that read codons beginning with uridine, leading to the formation of N6-(dimethylallyl)adenosine (i(6)A). The polypeptide is tRNA dimethylallyltransferase (Cereibacter sphaeroides (strain KD131 / KCTC 12085) (Rhodobacter sphaeroides)).